The following is a 204-amino-acid chain: MSKIHVLNDKFENSGELELPASYAEVNPHNLYLYVKSYLAGIRANSAHTKSRAFVSGGGKKPWRQKGRGGARAGSTRTNVWVGGAVAFGPTNEKNYFQKVNKKQKRLALEYALAVKAQDGKIFAVDSISIESGKTKDAANIIKNLKVKDALIVKDLLDDKTLLAFRNLANCYVVDANEVNAYLVSTFSSVIIEKAALKTITKEG.

A disordered region spans residues 53 to 73; that stretch reads AFVSGGGKKPWRQKGRGGARA.

Belongs to the universal ribosomal protein uL4 family. Part of the 50S ribosomal subunit.

Functionally, one of the primary rRNA binding proteins, this protein initially binds near the 5'-end of the 23S rRNA. It is important during the early stages of 50S assembly. It makes multiple contacts with different domains of the 23S rRNA in the assembled 50S subunit and ribosome. Forms part of the polypeptide exit tunnel. This is Large ribosomal subunit protein uL4 from Campylobacter concisus (strain 13826).